Consider the following 360-residue polypeptide: 3-dehydroquinate synthase (360 aa).

NAD(+) contacts are provided by residues 72–77 (DGEEFK), 106–110 (GVVGD), 130–131 (TT), K143, K152, and 170–173 (TLTT). Residues E185, H248, and H265 each coordinate Zn(2+).

It belongs to the sugar phosphate cyclases superfamily. Dehydroquinate synthase family. Requires Co(2+) as cofactor. It depends on Zn(2+) as a cofactor. NAD(+) is required as a cofactor.

The protein localises to the cytoplasm. The catalysed reaction is 7-phospho-2-dehydro-3-deoxy-D-arabino-heptonate = 3-dehydroquinate + phosphate. The protein operates within metabolic intermediate biosynthesis; chorismate biosynthesis; chorismate from D-erythrose 4-phosphate and phosphoenolpyruvate: step 2/7. Its function is as follows. Catalyzes the conversion of 3-deoxy-D-arabino-heptulosonate 7-phosphate (DAHP) to dehydroquinate (DHQ). This Geobacter metallireducens (strain ATCC 53774 / DSM 7210 / GS-15) protein is 3-dehydroquinate synthase.